The following is a 246-amino-acid chain: MKKILAEIAYDGSIYHGFQIQPTKPTVQGEIEKALMKINKKKVKIHSSGRTDKGVHAKKQIITFDIKINIQLNNLKKALNAILLKNSIKILKLRYVKNSFHPRFSAQKRKYSYCILNSDNYYPWEGYQAHYVNKKLSISNLNQMAKTLIGKHDFTTFSCIKDKSKSKFRHIYFAKFKKRGKYIIFEIIGSSFLWKMVRSIIGTMLDIEIKNESISTFETILKSKNRNLARTTAPANALFLERVYYE.

D52 functions as the Nucleophile in the catalytic mechanism. Y111 lines the substrate pocket.

The protein belongs to the tRNA pseudouridine synthase TruA family. Homodimer.

It catalyses the reaction uridine(38/39/40) in tRNA = pseudouridine(38/39/40) in tRNA. In terms of biological role, formation of pseudouridine at positions 38, 39 and 40 in the anticodon stem and loop of transfer RNAs. The chain is tRNA pseudouridine synthase A from Borreliella burgdorferi (strain ATCC 35210 / DSM 4680 / CIP 102532 / B31) (Borrelia burgdorferi).